The chain runs to 156 residues: ATP synthase subunit b (156 aa).

A helical membrane pass occupies residues 13–33 (AFIIFVWFCMKFVWPPLMNAI).

It belongs to the ATPase B chain family. In terms of assembly, F-type ATPases have 2 components, F(1) - the catalytic core - and F(0) - the membrane proton channel. F(1) has five subunits: alpha(3), beta(3), gamma(1), delta(1), epsilon(1). F(0) has three main subunits: a(1), b(2) and c(10-14). The alpha and beta chains form an alternating ring which encloses part of the gamma chain. F(1) is attached to F(0) by a central stalk formed by the gamma and epsilon chains, while a peripheral stalk is formed by the delta and b chains.

Its subcellular location is the cell inner membrane. Its function is as follows. F(1)F(0) ATP synthase produces ATP from ADP in the presence of a proton or sodium gradient. F-type ATPases consist of two structural domains, F(1) containing the extramembraneous catalytic core and F(0) containing the membrane proton channel, linked together by a central stalk and a peripheral stalk. During catalysis, ATP synthesis in the catalytic domain of F(1) is coupled via a rotary mechanism of the central stalk subunits to proton translocation. Component of the F(0) channel, it forms part of the peripheral stalk, linking F(1) to F(0). The protein is ATP synthase subunit b of Shewanella sediminis (strain HAW-EB3).